A 649-amino-acid chain; its full sequence is Acetyl-coenzyme A synthetase (649 aa).

CoA-binding positions include 191-194 (RGGR), T312, and N336. ATP contacts are provided by residues 388 to 390 (GEP), 412 to 417 (DTWWQT), D501, and R516. S524 is a binding site for CoA. Residue R527 coordinates ATP. V538, H540, and V543 together coordinate Mg(2+). R585 contributes to the CoA binding site. N6-acetyllysine is present on K610.

The protein belongs to the ATP-dependent AMP-binding enzyme family. Requires Mg(2+) as cofactor. In terms of processing, acetylated. Deacetylation by the SIR2-homolog deacetylase activates the enzyme.

It catalyses the reaction acetate + ATP + CoA = acetyl-CoA + AMP + diphosphate. Functionally, catalyzes the conversion of acetate into acetyl-CoA (AcCoA), an essential intermediate at the junction of anabolic and catabolic pathways. AcsA undergoes a two-step reaction. In the first half reaction, AcsA combines acetate with ATP to form acetyl-adenylate (AcAMP) intermediate. In the second half reaction, it can then transfer the acetyl group from AcAMP to the sulfhydryl group of CoA, forming the product AcCoA. This chain is Acetyl-coenzyme A synthetase, found in Marinobacter nauticus (strain ATCC 700491 / DSM 11845 / VT8) (Marinobacter aquaeolei).